We begin with the raw amino-acid sequence, 237 residues long: Riboflavin kinase (237 aa).

The tract at residues 1–101 (MRLKIKAIWV…SRIFSSEPDV (101 aa)) is unknown. The riboflavin kinase stretch occupies residues 102–237 (LELEGNVLKG…VKKQGMEGQK (136 aa)). 111 to 116 (GLGEGQ) serves as a coordination point for CDP. The Mg(2+) site is built by Thr140 and Asn142. Residues Thr197 and Glu205 each coordinate FMN. Position 210–213 (210–213 (VKLR)) interacts with CDP.

This sequence belongs to the archaeal riboflavin kinase family. It depends on Mg(2+) as a cofactor.

It catalyses the reaction riboflavin + CTP = CDP + FMN + H(+). It participates in cofactor biosynthesis; FMN biosynthesis; FMN from riboflavin (CTP route): step 1/1. In terms of biological role, catalyzes the CTP-dependent phosphorylation of riboflavin (vitamin B2) to form flavin mononucleotide (FMN). This is Riboflavin kinase (ribK) from Methanosarcina acetivorans (strain ATCC 35395 / DSM 2834 / JCM 12185 / C2A).